The following is a 311-amino-acid chain: Glutaminase (311 aa).

Residues Ser66, Asn116, Glu162, Asn169, Tyr193, Tyr245, and Val263 each coordinate substrate.

The protein belongs to the glutaminase family. Homotetramer.

It carries out the reaction L-glutamine + H2O = L-glutamate + NH4(+). The sequence is that of Glutaminase from Rhodopseudomonas palustris (strain BisB5).